The primary structure comprises 252 residues: 5'-nucleotidase SurE (252 aa).

Residues aspartate 8, aspartate 9, serine 39, and asparagine 95 each coordinate a divalent metal cation.

It belongs to the SurE nucleotidase family. The cofactor is a divalent metal cation.

The protein localises to the cytoplasm. The enzyme catalyses a ribonucleoside 5'-phosphate + H2O = a ribonucleoside + phosphate. In terms of biological role, nucleotidase that shows phosphatase activity on nucleoside 5'-monophosphates. The polypeptide is 5'-nucleotidase SurE (Clostridium botulinum (strain 657 / Type Ba4)).